Consider the following 101-residue polypeptide: Movement protein (101 aa).

Residues 30–50 (EVAILSFVALICIYLLYLWVL) form a helical membrane-spanning segment. Residues 80-101 (PIPNTLEPTAPVHPGPFVPGQG) are disordered. Over residues 90–101 (PVHPGPFVPGQG) the composition is skewed to pro residues.

This sequence belongs to the mastrevirus movement protein family. Interacts with the capsid protein (CP). Part of a MP-CP-viral DNA complex.

The protein localises to the host membrane. In terms of biological role, involved in the viral transport within, and between cells. In Avena sativa (Oat), this protein is Movement protein.